Here is a 167-residue protein sequence, read N- to C-terminus: Cell division protein SepF (167 aa).

Positions 25-64 are disordered; it reads EEDVAPVNNSTFQEKKHKKRSAVQRKQKNSDQEGDSVVPL. Residues 39-51 are compositionally biased toward basic residues; it reads KKHKKRSAVQRKQ.

The protein belongs to the SepF family. In terms of assembly, homodimer. Interacts with FtsZ.

It is found in the cytoplasm. In terms of biological role, cell division protein that is part of the divisome complex and is recruited early to the Z-ring. Probably stimulates Z-ring formation, perhaps through the cross-linking of FtsZ protofilaments. Its function overlaps with FtsA. The chain is Cell division protein SepF from Natranaerobius thermophilus (strain ATCC BAA-1301 / DSM 18059 / JW/NM-WN-LF).